We begin with the raw amino-acid sequence, 372 residues long: Alpha-1,3-mannosyl-glycoprotein 4-beta-N-acetylglucosaminyltransferase-like protein MGAT4D (372 aa).

At 1–8 the chain is on the cytoplasmic side; that stretch reads MKTKNVNL. The chain crosses the membrane as a helical; Signal-anchor for type II membrane protein span at residues 9-29; that stretch reads LFALVAVLLFGFSCFCISRMN. Residues 30–372 are Lumenal-facing; that stretch reads QTNNQLINCR…REQHLKDHYY (343 aa). Asn54 and Asn143 each carry an N-linked (GlcNAc...) asparagine glycan.

This sequence belongs to the glycosyltransferase 54 family. As to quaternary structure, may self-associate; specifically in the endoplasmic reticulum prior to its translocation to the Golgi. Interacts with MGAT1, MGAT3 and MAN2A2; may interact with MGTA1 specifically in the Golgi. In terms of processing, N-glycosylated. O-glycosylated; further modified with terminal sialic acid residues. Testis.

It is found in the golgi apparatus membrane. It localises to the endoplasmic reticulum membrane. In terms of biological role, may play a role in male spermatogenesis. In vitro acts as inhibitor of MGAT1 activity causing cell surface proteins to carry mainly high mannose N-glycans. The function is mediated by its lumenal domain and occurs specifically in the Golgi. A catalytic glucosyltransferase activity is not detected. May be involved in regulation of Sertoli-germ cell interactions during specific stages of spermatogenesis. The sequence is that of Alpha-1,3-mannosyl-glycoprotein 4-beta-N-acetylglucosaminyltransferase-like protein MGAT4D from Rattus norvegicus (Rat).